We begin with the raw amino-acid sequence, 576 residues long: Insulin-like growth factor 2 mRNA-binding protein 1 (576 aa).

RRM domains lie at 2–75 and 81–156; these read NKLY…HSVP and RKIQ…YIPD. Residues 158–189 are disordered; the sequence is QSVQGPENGRRGGFGARGAPRQGSPVTAGAPV. 2 KH domains span residues 195–260 and 276–343; these read DIPL…CKMI and EVPL…EQEI. Residue Tyr-396 is modified to Phosphotyrosine; by SRC. KH domains lie at 404–469 and 486–552; these read QETV…QGRI and KLET…QRKI.

This sequence belongs to the RRM IMP/VICKZ family. As to quaternary structure, can form homooligomers and heterooligomers with IGF2BP1 and IGF2BP3 in an RNA-dependent manner. Associates with the cytoskeleton, predominantly with actin filament bundles and occasionally with microtubules. In a heterologous system, interacts with ELAVL1, DHX9 and HNRNPU. Post-translationally, phosphorylated by SRC at Tyr-396. This residue is involved in ACTB mRNA binding, its phosphorylation impairs association with ACTB mRNA and hence abolishes translational repression. Phosphorylation occurs in close proximity to filopodia and in the growth cones of differentiated neuroglioblastoma cells. As to expression, expressed in neurons and embryonic fibroblasts (at protein level).

The protein localises to the nucleus. It is found in the cytoplasm. The protein resides in the perinuclear region. Its subcellular location is the P-body. It localises to the stress granule. The protein localises to the cell projection. It is found in the growth cone. The protein resides in the filopodium. Its subcellular location is the lamellipodium. Functionally, RNA-binding factor that recruits target transcripts to cytoplasmic protein-RNA complexes (mRNPs). This transcript 'caging' into mRNPs allows mRNA transport and transient storage. It also modulates the rate and location at which target transcripts encounter the translational apparatus and shields them from endonuclease attacks or microRNA-mediated degradation. Preferentially binds to N6-methyladenosine (m6A)-containing mRNAs and increases their stability. Plays a direct role in the transport and translation of transcripts required for axonal regeneration in adult sensory neurons. Regulates localized beta-actin/ACTB mRNA translation in polarized cells, a crucial process for cell migration and neurite outgrowth. Co-transcriptionally associates with the ACTB mRNA in the nucleus. This binding involves by a conserved 54-nucleotide element in the ACTB mRNA 3'-UTR, known as the 'zipcode'. The ribonucleoparticle (RNP) thus formed is exported to the cytoplasm, binds to a motor protein and is transported along the cytoskeleton to the cell periphery. During transport, IGF2BP1 prevents beta-actin mRNA from being translated into protein. When the RNP complex reaches its destination near the plasma membrane, IGF2BP1 is phosphorylated by SRC. This releases the mRNA, allowing ribosomal 40S and 60S subunits to assemble and initiate ACTB protein synthesis. The monomeric ACTB protein then assembles into the subcortical actin cytoskeleton, which pushes the leading edge onwards. Binds MYC mRNA. Binding to MYC mRNA is enhanced by m6A-modification of the CRD. Promotes the directed movement of cells by fine-tuning intracellular signaling networks. Binds to MAPK4 3'-UTR and inhibits its translation. Interacts with PTEN transcript open reading frame (ORF) and prevents mRNA decay. This combined action on MAPK4 (down-regulation) and PTEN (up-regulation) antagonizes HSPB1 phosphorylation, consequently it prevents G-actin sequestration by phosphorylated HSPB1, allowing F-actin polymerization. Hence enhances the velocity of cell migration and stimulates directed cell migration by PTEN-modulated polarization. The protein is Insulin-like growth factor 2 mRNA-binding protein 1 (IGF2BP1) of Gallus gallus (Chicken).